A 632-amino-acid chain; its full sequence is MKTYESNEYDVIVVGAGHAGVEAALASARMGEKTLLLTINLDMVAFMPCNPSVGGPAKGTVVREIDALGGEMGKNIDATYIQMRMLNTGKGPAVRALRAQADKWQYHERMKDTIENEPNLTLRQAVADELIVEDGVCKGLITNTGAKYYAKSVVLTTGTAARGKIIIGELAYSSGPNNSLPSIKLPENLEKLGFKLRRFKTGTPPRVDGNTIDYSKTQEEPGDKEPRHFSYTSKDSDYLEDQMSCYMTYTNTVTHDIIRANLDRAPMFSGVIKGVGPRYCPSIEDKVVRFADKDRHQIFLEPEGRHTKEIYVGDFSTSMPEEVQLKMLHSVAGLEKAELMRPGYAIEYDVIEPWQLKHTLETKNIKHLFTAGQMNGTSGYEEAAGQGLIAGINAALSAQNKPGFTLQRDEAYIGVLIDDLVTKGTNEPYRLLTSRAEYRLLLRHDNADLRLTEKGHELGLISEDRYKEFQDKKQAISQAMEAIKKVTIHPTDEVQEYLASVKQDRLNAGVSGADFLKRPRVTFDAVERLSGETLATDRYVKEQVEIALKYEGYIKKEKTLVDRLHRLESKKIPVDIDYNAIPSLATEARQKFEKIRPESIAQAERISGVNPADLAILTAYIQQGRIAKVKNK.

15-20 (GAGHAG) is an FAD binding site. Residues 205–231 (PRVDGNTIDYSKTQEEPGDKEPRHFSY) form a disordered region. Over residues 216–228 (KTQEEPGDKEPRH) the composition is skewed to basic and acidic residues. 276-290 (GPRYCPSIEDKVVRF) is a binding site for NAD(+).

It belongs to the MnmG family. In terms of assembly, homodimer. Heterotetramer of two MnmE and two MnmG subunits. The cofactor is FAD.

The protein resides in the cytoplasm. NAD-binding protein involved in the addition of a carboxymethylaminomethyl (cmnm) group at the wobble position (U34) of certain tRNAs, forming tRNA-cmnm(5)s(2)U34. The sequence is that of tRNA uridine 5-carboxymethylaminomethyl modification enzyme MnmG from Lactobacillus johnsonii (strain CNCM I-12250 / La1 / NCC 533).